Here is a 213-residue protein sequence, read N- to C-terminus: UPF0502 protein Daro_2469 (213 aa).

This sequence belongs to the UPF0502 family.

This Dechloromonas aromatica (strain RCB) protein is UPF0502 protein Daro_2469.